Reading from the N-terminus, the 376-residue chain is Adipocyte plasma membrane-associated protein (376 aa).

The chain crosses the membrane as a helical span at residues 1 to 17 (MTFLMLAVSLAIPLLGA). Residue Asn-120 is glycosylated (N-linked (GlcNAc...) asparagine).

It belongs to the strictosidine synthase family.

The protein localises to the membrane. Functionally, exhibits strong arylesterase activity with beta-naphthyl acetate and phenyl acetate. May play a role in adipocyte differentiation. This chain is Adipocyte plasma membrane-associated protein (Apmap), found in Rattus norvegicus (Rat).